The following is a 320-amino-acid chain: o-succinylbenzoate synthase (320 aa).

Lysine 133 (proton donor) is an active-site residue. Positions 161, 190, and 213 each coordinate Mg(2+). The active-site Proton acceptor is the lysine 235.

The protein belongs to the mandelate racemase/muconate lactonizing enzyme family. MenC type 1 subfamily. The cofactor is a divalent metal cation.

The enzyme catalyses (1R,6R)-6-hydroxy-2-succinyl-cyclohexa-2,4-diene-1-carboxylate = 2-succinylbenzoate + H2O. It functions in the pathway quinol/quinone metabolism; 1,4-dihydroxy-2-naphthoate biosynthesis; 1,4-dihydroxy-2-naphthoate from chorismate: step 4/7. Its pathway is quinol/quinone metabolism; menaquinone biosynthesis. In terms of biological role, converts 2-succinyl-6-hydroxy-2,4-cyclohexadiene-1-carboxylate (SHCHC) to 2-succinylbenzoate (OSB). The polypeptide is o-succinylbenzoate synthase (Salmonella arizonae (strain ATCC BAA-731 / CDC346-86 / RSK2980)).